A 209-amino-acid polypeptide reads, in one-letter code: E3 ubiquitin-protein ligase RNF138 (209 aa).

An RING-type zinc finger spans residues 18–58; the sequence is CPVCQEVLKTPVRTAACQHVFCRKCFLTAMRESGIHCPLCR. Zn(2+) contacts are provided by Cys-86, Cys-89, His-101, and Cys-105. The segment at 86 to 105 adopts a C2HC RNF-type zinc-finger fold; the sequence is CRCCSKKIKFYRMRHHYKSC. The disordered stretch occupies residues 125–154; sequence QDSVRSSNRSETSASDNTETYQEDTSSSGH. At Thr-142 the chain carries Phosphothreonine. Residues 157–180 form a C2H2-type zinc finger; sequence FKCPLCQESNFTRQRLLDHCNSNH. In terms of domain architecture, UIM spans 189-207; sequence LQLDEETQYQTAVEESFQV.

Interacts with NLK. Interacts with XRCC5/Ku80. Interacts with RBBP8/CtIP. Auto-ubiquitinated.

It is found in the chromosome. The enzyme catalyses S-ubiquitinyl-[E2 ubiquitin-conjugating enzyme]-L-cysteine + [acceptor protein]-L-lysine = [E2 ubiquitin-conjugating enzyme]-L-cysteine + N(6)-ubiquitinyl-[acceptor protein]-L-lysine.. It functions in the pathway protein modification; protein ubiquitination. In terms of biological role, E3 ubiquitin-protein ligase involved in DNA damage response by promoting DNA resection and homologous recombination. Recruited to sites of double-strand breaks following DNA damage and specifically promotes double-strand break repair via homologous recombination. Two different, non-exclusive, mechanisms have been proposed. According to a report, regulates the choice of double-strand break repair by favoring homologous recombination over non-homologous end joining (NHEJ): acts by mediating ubiquitination of XRCC5/Ku80, leading to remove the Ku complex from DNA breaks, thereby promoting homologous recombination. According to another report, cooperates with UBE2Ds E2 ubiquitin ligases (UBE2D1, UBE2D2, UBE2D3 or UBE2D4) to promote homologous recombination by mediating ubiquitination of RBBP8/CtIP. Together with NLK, involved in the ubiquitination and degradation of TCF/LEF. Also exhibits auto-ubiquitination activity in combination with UBE2K. May act as a negative regulator in the Wnt/beta-catenin-mediated signaling pathway. The polypeptide is E3 ubiquitin-protein ligase RNF138 (Rattus norvegicus (Rat)).